Here is a 134-residue protein sequence, read N- to C-terminus: D-ribose pyranase (134 aa).

The Proton donor role is filled by histidine 20. Residues aspartate 28, histidine 99, and 123 to 125 (FSN) contribute to the substrate site.

This sequence belongs to the RbsD / FucU family. RbsD subfamily. In terms of assembly, homodecamer.

Its subcellular location is the cytoplasm. It carries out the reaction beta-D-ribopyranose = beta-D-ribofuranose. The protein operates within carbohydrate metabolism; D-ribose degradation; D-ribose 5-phosphate from beta-D-ribopyranose: step 1/2. Catalyzes the interconversion of beta-pyran and beta-furan forms of D-ribose. This is D-ribose pyranase from Staphylococcus carnosus (strain TM300).